The following is a 166-amino-acid chain: Endoribonuclease YbeY (166 aa).

3 residues coordinate Zn(2+): histidine 132, histidine 136, and histidine 142.

It belongs to the endoribonuclease YbeY family. Requires Zn(2+) as cofactor.

It localises to the cytoplasm. Single strand-specific metallo-endoribonuclease involved in late-stage 70S ribosome quality control and in maturation of the 3' terminus of the 16S rRNA. In Clostridium botulinum (strain ATCC 19397 / Type A), this protein is Endoribonuclease YbeY.